A 339-amino-acid chain; its full sequence is Senescence-specific cysteine protease SAG39 (339 aa).

A signal peptide spans 1–23 (MAMAKALLFAILGCLCLCSAVLA). 3 disulfides stabilise this stretch: Cys144-Cys187, Cys178-Cys220, and Cys276-Cys328. Cys147 is an active-site residue. Residues His282 and Asn303 contribute to the active site.

This sequence belongs to the peptidase C1 family.

The protein resides in the vacuole. In terms of biological role, cysteine protease that may have a developmental senescence specific cell death function during apoptosis, heavy metal detoxification, and hypersensitive response. The chain is Senescence-specific cysteine protease SAG39 from Oryza sativa subsp. indica (Rice).